The sequence spans 694 residues: NADPH--cytochrome P450 reductase (694 aa).

The Lumenal portion of the chain corresponds to 1–8 (MAQLDTLD). The chain crosses the membrane as a helical span at residues 9–31 (LVVLAVLLVGSVAYFTKGTYWAV). Residues 32–694 (AKDPYASTGP…RGRYQEDVWS (663 aa)) are Cytoplasmic-facing. In terms of domain architecture, Flavodoxin-like spans 66–220 (CVIFYGSQTG…DFLAWKEPMW (155 aa)). FMN contacts are provided by residues 72–77 (SQTGTA), 123–126 (ATYG), 168–177 (LGNNTYEHYN), and D203. The FAD-binding FR-type domain occupies 276-537 (HNPFIAPIAE…HVRHSNFKLP (262 aa)). Position 295 (R295) interacts with NADP(+). Residues 450–453 (RYYS), 468–470 (TAV), and 485–488 (GVTT) each bind FAD. Residues T551, 613 to 614 (SR), 619 to 623 (KVYVQ), and E655 contribute to the NADP(+) site. W693 is a binding site for FAD.

The protein belongs to the NADPH--cytochrome P450 reductase family. In the N-terminal section; belongs to the flavodoxin family. This sequence in the C-terminal section; belongs to the flavoprotein pyridine nucleotide cytochrome reductase family. FAD serves as cofactor. It depends on FMN as a cofactor.

The protein localises to the endoplasmic reticulum membrane. It is found in the mitochondrion outer membrane. Its subcellular location is the cell membrane. The enzyme catalyses 2 oxidized [cytochrome P450] + NADPH = 2 reduced [cytochrome P450] + NADP(+) + H(+). This enzyme is required for electron transfer from NADP to cytochrome P450 in microsomes. It can also provide electron transfer to heme oxygenase and cytochrome B5. Involved in ergosterol biosynthesis. The sequence is that of NADPH--cytochrome P450 reductase from Aspergillus niger.